A 199-amino-acid chain; its full sequence is Holliday junction branch migration complex subunit RuvA (199 aa).

The domain I stretch occupies residues 1-64; it reads MIALLTGKLA…EDAINLYGFR (64 aa). The segment at 65–143 is domain II; the sequence is TQQEKELFQL…KLGLAQPQAG (79 aa). Residues 144–148 form a flexible linker region; it reads GTTAP. Residues 149–199 are domain III; the sequence is AKQEIRDDVLSALINLGYKEAVVQKALAELKVTEDATVELVLKQALKILMK.

The protein belongs to the RuvA family. Homotetramer. Forms an RuvA(8)-RuvB(12)-Holliday junction (HJ) complex. HJ DNA is sandwiched between 2 RuvA tetramers; dsDNA enters through RuvA and exits via RuvB. An RuvB hexamer assembles on each DNA strand where it exits the tetramer. Each RuvB hexamer is contacted by two RuvA subunits (via domain III) on 2 adjacent RuvB subunits; this complex drives branch migration. In the full resolvosome a probable DNA-RuvA(4)-RuvB(12)-RuvC(2) complex forms which resolves the HJ.

It localises to the cytoplasm. Its function is as follows. The RuvA-RuvB-RuvC complex processes Holliday junction (HJ) DNA during genetic recombination and DNA repair, while the RuvA-RuvB complex plays an important role in the rescue of blocked DNA replication forks via replication fork reversal (RFR). RuvA specifically binds to HJ cruciform DNA, conferring on it an open structure. The RuvB hexamer acts as an ATP-dependent pump, pulling dsDNA into and through the RuvAB complex. HJ branch migration allows RuvC to scan DNA until it finds its consensus sequence, where it cleaves and resolves the cruciform DNA. This is Holliday junction branch migration complex subunit RuvA from Citrifermentans bemidjiense (strain ATCC BAA-1014 / DSM 16622 / JCM 12645 / Bem) (Geobacter bemidjiensis).